The sequence spans 172 residues: Large ribosomal subunit protein uL10 (172 aa).

Belongs to the universal ribosomal protein uL10 family. Part of the ribosomal stalk of the 50S ribosomal subunit. The N-terminus interacts with L11 and the large rRNA to form the base of the stalk. The C-terminus forms an elongated spine to which L12 dimers bind in a sequential fashion forming a multimeric L10(L12)X complex.

Its function is as follows. Forms part of the ribosomal stalk, playing a central role in the interaction of the ribosome with GTP-bound translation factors. The polypeptide is Large ribosomal subunit protein uL10 (Acidothermus cellulolyticus (strain ATCC 43068 / DSM 8971 / 11B)).